Consider the following 307-residue polypeptide: Thioredoxin reductase (307 aa).

34-41 contributes to the FAD binding site; it reads ESKAHGGQ. A disulfide bond links cysteine 134 and cysteine 137. FAD is bound at residue 275-284; the sequence is DVRAKSFRQV.

Belongs to the class-II pyridine nucleotide-disulfide oxidoreductase family. In terms of assembly, homodimer. Requires FAD as cofactor.

It localises to the cytoplasm. It catalyses the reaction [thioredoxin]-dithiol + NADP(+) = [thioredoxin]-disulfide + NADPH + H(+). This Treponema pallidum (strain Nichols) protein is Thioredoxin reductase (trxB).